The sequence spans 192 residues: Pyridoxal 5'-phosphate synthase subunit PdxT (192 aa).

Residue 47–49 (GES) coordinates L-glutamine. Catalysis depends on C79, which acts as the Nucleophile. Residues R106 and 134 to 135 (IR) each bind L-glutamine. Residues H170 and E172 each act as charge relay system in the active site.

Belongs to the glutaminase PdxT/SNO family. In the presence of PdxS, forms a dodecamer of heterodimers. Only shows activity in the heterodimer.

It carries out the reaction aldehydo-D-ribose 5-phosphate + D-glyceraldehyde 3-phosphate + L-glutamine = pyridoxal 5'-phosphate + L-glutamate + phosphate + 3 H2O + H(+). The catalysed reaction is L-glutamine + H2O = L-glutamate + NH4(+). It participates in cofactor biosynthesis; pyridoxal 5'-phosphate biosynthesis. Its function is as follows. Catalyzes the hydrolysis of glutamine to glutamate and ammonia as part of the biosynthesis of pyridoxal 5'-phosphate. The resulting ammonia molecule is channeled to the active site of PdxS. The chain is Pyridoxal 5'-phosphate synthase subunit PdxT from Geobacillus sp. (strain WCH70).